The following is a 211-amino-acid chain: UPF0056 membrane protein BUsg_257 (211 aa).

Helical transmembrane passes span 14–34 (FFVS…FTTM), 54–74 (AFII…AFGI), 76–96 (INSF…SMIS), 116–136 (VVPL…TIVW), 144–164 (SDFL…WLCF), and 185–205 (IMGL…IKSI).

The protein belongs to the UPF0056 (MarC) family.

The protein resides in the cell membrane. The protein is UPF0056 membrane protein BUsg_257 of Buchnera aphidicola subsp. Schizaphis graminum (strain Sg).